The primary structure comprises 498 residues: MPWEFLKKCDRQKAEVRGEKEEQEPVPGNPHFQVQFHVTSCRFAFLAFLAGSFLAFSLHALISSNLFWRLRQLHHLPTAHYLQTRDEFAVYSVDELNAFKEFYDKSTADSVGATYTEAEETNIKEALSSLRLAQDMYMAGKDDKAARLFEHALALAPRHPEVLLRYGEFLEHNQRNIVLADQYYFQALTINPSHSEALANRQRTADVVQTLDERRLASLDAKRAALSAIHEANSALRRAKKEAYFQHIYHSVGIEGNTMTLAQTRSILETRMAVDGKSIDEHNEILGMDLAMKYINASLVQKLEITIKDILELHRRVLGHVDPIEGGEFRRNQVYVGGHVPPGPGDLAVLMQRFEDWLNSEYSSSLHPVNYAALAHYKLVHIHPFIDGNGRTSRLLMNTLLMRAGYPPVIIPKQQRSKYYHFLKLANEGDIRPFVRFIADCTEKTLDLYLWATSDLPQQIPMLIQTETEAGEQLVKLQSPQMASIPESFYESGSGALP.

The chain crosses the membrane as a helical span at residues 43–63 (FAFLAFLAGSFLAFSLHALIS). TPR repeat units lie at residues 126–159 (ALSSLRLAQDMYMAGKDDKAARLFEHALALAPRH) and 160–194 (PEVLLRYGEFLEHNQRNIVLADQYYFQALTINPSH). An Inhibitory (S/T)XXXE(G/N) motif motif is present at residues 251–256 (SVGIEG). Residues glutamate 255 and 336–339 (VGGH) each bind ATP. Residues 305 to 440 (ITIKDILELH…IRPFVRFIAD (136 aa)) form the Fido domain. Histidine 383 is an active-site residue. Residues 387–394 (DGNGRTSR), 419–420 (YY), and asparagine 427 contribute to the ATP site.

This sequence belongs to the fic family. As to quaternary structure, homodimer.

The protein localises to the membrane. It catalyses the reaction L-tyrosyl-[protein] + ATP = O-(5'-adenylyl)-L-tyrosyl-[protein] + diphosphate. The enzyme catalyses L-threonyl-[protein] + ATP = 3-O-(5'-adenylyl)-L-threonyl-[protein] + diphosphate. The catalysed reaction is 3-O-(5'-adenylyl)-L-threonyl-[protein] + H2O = L-threonyl-[protein] + AMP + H(+). The side chain of Glu-255 determines which of the two opposing activities (AMPylase or de-AMPylase) will take place. In response to endoplasmic reticulum stress, mediates de-AMPylase activity. Adenylyltransferase activity is inhibited by the inhibitory helix present at the N-terminus: Glu-255 binds ATP and competes with ATP-binding at Arg-394, thereby preventing adenylyltransferase activity. In unstressed cells, disengagement of Glu-255 promotes adenylyltransferase activity. Activation dissociates ATP-binding from Glu-255, allowing ordered binding of the entire ATP moiety with the alpha-phosphate in an orientation that is productive for accepting an incoming target hydroxyl side chain. Protein that can both mediate the addition of adenosine 5'-monophosphate (AMP) to specific residues of target proteins (AMPylation), and the removal of the same modification from target proteins (de-AMPylation), depending on the context. The side chain of Glu-255 determines which of the two opposing activities (AMPylase or de-AMPylase) will take place. Acts as a key regulator of the unfolded protein response (UPR) by mediating AMPylation or de-AMPylation of Hsc70-3/BiP. In unstressed cells, acts as an adenylyltransferase by mediating AMPylation of Hsc70-3/BiP at 'Thr-518', thereby inactivating it. In response to endoplasmic reticulum stress, acts as a phosphodiesterase by mediating removal of ATP (de-AMPylation) from Hsc70-3/BiP at 'Thr-518', leading to restore HSPA5/BiP activity. This is Protein adenylyltransferase Fic from Drosophila willistoni (Fruit fly).